Here is a 489-residue protein sequence, read N- to C-terminus: Cytochrome P450 302a1, mitochondrial (489 aa).

C434 provides a ligand contact to heme.

Belongs to the cytochrome P450 family. Requires heme as cofactor. In terms of tissue distribution, complex coexpression pattern of dib (disembodied) and sad (shade) in the early embryo that restricts to the prothoracic gland cells of the developing ring gland during late embryogenesis. In larvae and adult, coexpression is seen in prothoracic gland and follicle cells of the ovary. In adults, coexpression is seen in the follicle cells.

The protein localises to the mitochondrion membrane. It carries out the reaction 2,22-dideoxyecdysone + 2 reduced [adrenodoxin] + O2 + 2 H(+) = 2-deoxyecdysone + 2 oxidized [adrenodoxin] + H2O. It participates in steroid biosynthesis; ecdysteroid biosynthesis. Its function is as follows. Required for CNS development; negatively regulates glial cell division in the embryonic midline. Involved in the metabolism of insect hormones; responsible for ecdysteroid C22-hydroxylase activity. May be involved in the breakdown of synthetic insecticides. The protein is Cytochrome P450 302a1, mitochondrial of Drosophila melanogaster (Fruit fly).